The following is a 262-amino-acid chain: Pimeloyl-[acyl-carrier protein] methyl ester esterase (262 aa).

The 228-residue stretch at 15–242 (HLVLLHGWGL…AAHAPFISHP (228 aa)) folds into the AB hydrolase-1 domain. Residues Trp22, 82–83 (SL), and 143–147 (FLALQ) each bind substrate. The Nucleophile role is filled by Ser82. Catalysis depends on residues Asp207 and His235. His235 serves as a coordination point for substrate.

This sequence belongs to the AB hydrolase superfamily. Carboxylesterase BioH family. As to quaternary structure, monomer.

It is found in the cytoplasm. The catalysed reaction is 6-carboxyhexanoyl-[ACP] methyl ester + H2O = 6-carboxyhexanoyl-[ACP] + methanol + H(+). The protein operates within cofactor biosynthesis; biotin biosynthesis. The physiological role of BioH is to remove the methyl group introduced by BioC when the pimeloyl moiety is complete. It allows to synthesize pimeloyl-ACP via the fatty acid synthetic pathway through the hydrolysis of the ester bonds of pimeloyl-ACP esters. This Shigella flexneri protein is Pimeloyl-[acyl-carrier protein] methyl ester esterase.